The sequence spans 772 residues: NAD(P)H-quinone oxidoreductase subunit 5, chloroplastic (772 aa).

Transmembrane regions (helical) follow at residues 8-28, 39-59, 87-107, 120-140, 147-167, 185-205, 219-239, 258-278, 291-311, 395-415, 425-445, 574-594, 631-651, 710-730, and 738-758; these read IWIV…GLFF, ICAI…FSIF, FLID…GILV, GYVR…GLVL, IYIF…FWFS, GDFG…SFDI, NGVN…GPAA, TPIS…FFVA, MNII…IALA, GTTF…ACFW, WIAS…TGFY, LFSL…GVPF, IPSV…YGPV, WIID…GEGM, and IPSY…ILII.

It belongs to the complex I subunit 5 family. In terms of assembly, NDH is composed of at least 16 different subunits, 5 of which are encoded in the nucleus.

The protein resides in the plastid. The protein localises to the chloroplast thylakoid membrane. The catalysed reaction is a plastoquinone + NADH + (n+1) H(+)(in) = a plastoquinol + NAD(+) + n H(+)(out). It carries out the reaction a plastoquinone + NADPH + (n+1) H(+)(in) = a plastoquinol + NADP(+) + n H(+)(out). Its function is as follows. NDH shuttles electrons from NAD(P)H:plastoquinone, via FMN and iron-sulfur (Fe-S) centers, to quinones in the photosynthetic chain and possibly in a chloroplast respiratory chain. The immediate electron acceptor for the enzyme in this species is believed to be plastoquinone. Couples the redox reaction to proton translocation, and thus conserves the redox energy in a proton gradient. This Angiopteris evecta (Mule's foot fern) protein is NAD(P)H-quinone oxidoreductase subunit 5, chloroplastic (ndhF).